Reading from the N-terminus, the 488-residue chain is Altronate oxidoreductase (488 aa).

18–29 is a binding site for NAD(+); sequence VIQFGEGNFLRA.

It belongs to the mannitol dehydrogenase family. UxaB subfamily.

It carries out the reaction D-altronate + NAD(+) = keto-D-tagaturonate + NADH + H(+). Its pathway is carbohydrate metabolism; pentose and glucuronate interconversion. This Pectobacterium atrosepticum (strain SCRI 1043 / ATCC BAA-672) (Erwinia carotovora subsp. atroseptica) protein is Altronate oxidoreductase.